A 962-amino-acid polypeptide reads, in one-letter code: Glycine dehydrogenase (decarboxylating) (962 aa).

The residue at position 710 (K710) is an N6-(pyridoxal phosphate)lysine.

Belongs to the GcvP family. The glycine cleavage system is composed of four proteins: P, T, L and H. Pyridoxal 5'-phosphate is required as a cofactor.

The catalysed reaction is N(6)-[(R)-lipoyl]-L-lysyl-[glycine-cleavage complex H protein] + glycine + H(+) = N(6)-[(R)-S(8)-aminomethyldihydrolipoyl]-L-lysyl-[glycine-cleavage complex H protein] + CO2. In terms of biological role, the glycine cleavage system catalyzes the degradation of glycine. The P protein binds the alpha-amino group of glycine through its pyridoxal phosphate cofactor; CO(2) is released and the remaining methylamine moiety is then transferred to the lipoamide cofactor of the H protein. In Idiomarina loihiensis (strain ATCC BAA-735 / DSM 15497 / L2-TR), this protein is Glycine dehydrogenase (decarboxylating).